The following is a 133-amino-acid chain: Protein msa (133 aa).

A run of 4 helical transmembrane segments spans residues 3–23 (YLILSLVANLLVFGVLSAIGL), 27–47 (ILAAMMMILVIPITISGILFF), 55–75 (YIFFNILFIDFYYYIYNVHLM), and 103–123 (FGFDEILFFTLYLLLILIILY).

It localises to the cell membrane. In terms of biological role, accessory element involved in the expression of sarA and several virulence factors. Modulates SarA production and/or function in a strain-dependent manner. Affects the transcription of the accessory gene regulator (agr) and genes encoding virulence factors including alpha toxin (hla) and protein A (spa). This is Protein msa (msa) from Staphylococcus aureus (strain bovine RF122 / ET3-1).